A 115-amino-acid polypeptide reads, in one-letter code: MSNIIKQIEDEQMKQDVPAFRPGDTVEVKVWVVEGSKKRLQAFEGVVIAIRNRGLHSAFTVRKISNGEGVERVFQTHSPVVDSIAVKRRGAVRKAKLYYLRERTGKSARIKERLN.

This sequence belongs to the bacterial ribosomal protein bL19 family.

Its function is as follows. This protein is located at the 30S-50S ribosomal subunit interface and may play a role in the structure and function of the aminoacyl-tRNA binding site. The sequence is that of Large ribosomal subunit protein bL19 from Pectobacterium carotovorum subsp. carotovorum (strain PC1).